The following is a 1101-amino-acid chain: Coiled-coil domain-containing protein 150 (1101 aa).

4 coiled-coil regions span residues Arg-106–Ser-299, Ala-398–Asn-680, Asp-712–Gln-940, and Val-970–Arg-1033. Over residues Ser-1055 to Val-1071 the composition is skewed to basic and acidic residues. The tract at residues Ser-1055–Lys-1101 is disordered.

The chain is Coiled-coil domain-containing protein 150 (CCDC150) from Homo sapiens (Human).